Here is a 368-residue protein sequence, read N- to C-terminus: N-acetylneuraminate epimerase (368 aa).

Residues 1 to 19 (MNKTITALTIIMASFATNA) form the signal peptide. 7 Kelch repeats span residues 40–84 (TVYI…AFID), 86–137 (NLYV…FVHN), 139–173 (KAYVTGGVNQNIFNGYFEDLNEAGKDSTTIDKINA), 174–219 (HYFD…VNKG), 222–265 (TWLI…VAGG), 287–336 (ENYQ…PWNN), and 338–367 (LLIIGGETAGGKAVTDSVLISVKDNKVTVQ). The active-site Proton acceptor is Glu228.

The protein belongs to the NanM family. Homodimer.

The protein localises to the periplasm. The enzyme catalyses N-acetyl-alpha-neuraminate = N-acetyl-beta-neuraminate. In terms of biological role, converts alpha-N-acetylneuranimic acid (Neu5Ac) to the beta-anomer, accelerating the equilibrium between the alpha- and beta-anomers. Probably facilitates sialidase-negative bacteria to compete successfully for limited amounts of extracellular Neu5Ac, which is likely taken up in the beta-anomer. In addition, the rapid removal of sialic acid from solution might be advantageous to the bacterium to damp down host responses. This Escherichia coli O1:K1 / APEC protein is N-acetylneuraminate epimerase.